A 540-amino-acid polypeptide reads, in one-letter code: Chaperonin GroEL 2/3 (540 aa).

Residues 30 to 33 (TLGP), Lys51, 87 to 91 (DGTTT), Gly415, 479 to 481 (NAA), and Asp495 contribute to the ATP site.

This sequence belongs to the chaperonin (HSP60) family. As to quaternary structure, forms a cylinder of 14 subunits composed of two heptameric rings stacked back-to-back. Interacts with the co-chaperonin GroES.

The protein resides in the cytoplasm. It catalyses the reaction ATP + H2O + a folded polypeptide = ADP + phosphate + an unfolded polypeptide.. Together with its co-chaperonin GroES, plays an essential role in assisting protein folding. The GroEL-GroES system forms a nano-cage that allows encapsulation of the non-native substrate proteins and provides a physical environment optimized to promote and accelerate protein folding. In Paraburkholderia xenovorans (strain LB400), this protein is Chaperonin GroEL 2/3.